A 291-amino-acid polypeptide reads, in one-letter code: MASGSEAEKSPEVVLEWPKKDKKRLLHAVYRVGDLDRTIKCYTECFGMKLLRKRDVPEEKYTNAFLGFGPEDTNFALELTYNYGVDKYDIGAGFGHFAIATEDVYKLAEKIKSSCCCKITREPGPVKGGSTVIAFAQDPDGYMFELIQRGPTPEPLCQVMLRVGDLDRSIKFYEKALGMKLLRKKDVPDYKYTIAMLGYADEDKTTVIELTYNYGVTEYTKGNAYAQVAIGTEDVYKSAEAVELVTKELGGKILRQPGPLPGLNTKIASFLDPDGWKVVLVDNADFLKELQ.

VOC domains follow at residues 24–149 and 155–283; these read RLLH…LIQR and PLCQ…LVDN. Positions 31, 82, and 96 each coordinate substrate. Residue histidine 96 is part of the active site. Glutamate 145 functions as the Proton donor/acceptor in the catalytic mechanism. Glutamate 145 provides a ligand contact to Ni(2+). Active-site residues include glutamine 158 and glutamate 209. Glutamate 209 contacts Ni(2+).

It belongs to the glyoxalase I family. Monomer. Ni(2+) is required as a cofactor. Phosphorylated after gibberellin treatment. As to expression, expressed in callus, stem, leaves, panicles and maturing seeds (at protein level).

The catalysed reaction is (R)-S-lactoylglutathione = methylglyoxal + glutathione. It functions in the pathway secondary metabolite metabolism; methylglyoxal degradation; (R)-lactate from methylglyoxal: step 1/2. Catalyzes the conversion of hemimercaptal, formed from methylglyoxal and glutathione, to S-lactoylglutathione. Involved in the detoxifiation of methylglyoxal. Can functionally complement growth defect of a yeast mutant lacking GLY I. Involved in abiotic stress response. Over-expression of GLYI-11 in tobacco increases tolerance to osmotic, oxidative and salt stresses. This Oryza sativa subsp. japonica (Rice) protein is Lactoylglutathione lyase.